Reading from the N-terminus, the 546-residue chain is Chaperonin GroEL (546 aa).

Residues 30 to 33, K51, 87 to 91, G415, 479 to 481, and D495 contribute to the ATP site; these read TLGP, DGTTT, and NAA. A disordered region spans residues 527–546; the sequence is DESAAPAMPGGMGGMGDMGM. Over residues 536–546 the composition is skewed to gly residues; that stretch reads GGMGGMGDMGM.

It belongs to the chaperonin (HSP60) family. As to quaternary structure, forms a cylinder of 14 subunits composed of two heptameric rings stacked back-to-back. Interacts with the co-chaperonin GroES.

The protein resides in the cytoplasm. The catalysed reaction is ATP + H2O + a folded polypeptide = ADP + phosphate + an unfolded polypeptide.. Together with its co-chaperonin GroES, plays an essential role in assisting protein folding. The GroEL-GroES system forms a nano-cage that allows encapsulation of the non-native substrate proteins and provides a physical environment optimized to promote and accelerate protein folding. The polypeptide is Chaperonin GroEL (Acidovorax sp. (strain JS42)).